The following is an 89-amino-acid chain: Small ribosomal subunit protein uS15 (89 aa).

It belongs to the universal ribosomal protein uS15 family. As to quaternary structure, part of the 30S ribosomal subunit. Forms a bridge to the 50S subunit in the 70S ribosome, contacting the 23S rRNA.

Its function is as follows. One of the primary rRNA binding proteins, it binds directly to 16S rRNA where it helps nucleate assembly of the platform of the 30S subunit by binding and bridging several RNA helices of the 16S rRNA. Functionally, forms an intersubunit bridge (bridge B4) with the 23S rRNA of the 50S subunit in the ribosome. In Mycobacterium avium (strain 104), this protein is Small ribosomal subunit protein uS15.